The following is a 327-amino-acid chain: Eukaryotic translation initiation factor 3 subunit I (327 aa).

WD repeat units lie at residues 8–47 (GHQR…RLGT), 50–89 (GHIG…ALGK), 147–186 (EQQS…ELNS), 189–228 (DHTA…CLKT), and 286–327 (GHFG…HTFE).

This sequence belongs to the eIF-3 subunit I family. Component of the eukaryotic translation initiation factor 3 (eIF-3) complex.

The protein resides in the cytoplasm. Component of the eukaryotic translation initiation factor 3 (eIF-3) complex, which is involved in protein synthesis of a specialized repertoire of mRNAs and, together with other initiation factors, stimulates binding of mRNA and methionyl-tRNAi to the 40S ribosome. The eIF-3 complex specifically targets and initiates translation of a subset of mRNAs involved in cell proliferation. In Anopheles gambiae (African malaria mosquito), this protein is Eukaryotic translation initiation factor 3 subunit I.